Reading from the N-terminus, the 338-residue chain is Beta-ketoacyl-[acyl-carrier-protein] synthase III (338 aa).

Residues C119 and H261 contribute to the active site. The interval 262-266 (QANQR) is ACP-binding. The active site involves N291.

It belongs to the thiolase-like superfamily. FabH family. In terms of assembly, homodimer.

The protein localises to the cytoplasm. The catalysed reaction is malonyl-[ACP] + acetyl-CoA + H(+) = 3-oxobutanoyl-[ACP] + CO2 + CoA. It participates in lipid metabolism; fatty acid biosynthesis. Catalyzes the condensation reaction of fatty acid synthesis by the addition to an acyl acceptor of two carbons from malonyl-ACP. Catalyzes the first condensation reaction which initiates fatty acid synthesis and may therefore play a role in governing the total rate of fatty acid production. Possesses both acetoacetyl-ACP synthase and acetyl transacylase activities. Its substrate specificity determines the biosynthesis of branched-chain and/or straight-chain of fatty acids. The chain is Beta-ketoacyl-[acyl-carrier-protein] synthase III from Prochlorococcus marinus (strain NATL2A).